We begin with the raw amino-acid sequence, 202 residues long: Translation initiation factor IF-3 (202 aa).

A disordered region spans residues 172–202 (KTRASARHPEVPGAGSVQDIDATGDTDGSPH).

The protein belongs to the IF-3 family. As to quaternary structure, monomer.

It is found in the cytoplasm. IF-3 binds to the 30S ribosomal subunit and shifts the equilibrium between 70S ribosomes and their 50S and 30S subunits in favor of the free subunits, thus enhancing the availability of 30S subunits on which protein synthesis initiation begins. This chain is Translation initiation factor IF-3, found in Mycobacterium leprae (strain TN).